The primary structure comprises 177 residues: Inner membrane-spanning protein YciB (177 aa).

A run of 5 helical transmembrane segments spans residues Met23 to Phe43, Thr50 to His70, His73 to Ser93, Leu119 to Tyr139, and Phe149 to Leu169.

The protein belongs to the YciB family.

It localises to the cell inner membrane. Its function is as follows. Plays a role in cell envelope biogenesis, maintenance of cell envelope integrity and membrane homeostasis. In Chromobacterium violaceum (strain ATCC 12472 / DSM 30191 / JCM 1249 / CCUG 213 / NBRC 12614 / NCIMB 9131 / NCTC 9757 / MK), this protein is Inner membrane-spanning protein YciB.